Reading from the N-terminus, the 190-residue chain is Protein GrpE (190 aa).

Residues 1–41 form a disordered region; sequence MAKEKQEEQQKQTAPENEKAPKKDIKKEASDKKGDQTSKLK.

The protein belongs to the GrpE family. As to quaternary structure, homodimer.

Its subcellular location is the cytoplasm. Participates actively in the response to hyperosmotic and heat shock by preventing the aggregation of stress-denatured proteins, in association with DnaK and GrpE. It is the nucleotide exchange factor for DnaK and may function as a thermosensor. Unfolded proteins bind initially to DnaJ; upon interaction with the DnaJ-bound protein, DnaK hydrolyzes its bound ATP, resulting in the formation of a stable complex. GrpE releases ADP from DnaK; ATP binding to DnaK triggers the release of the substrate protein, thus completing the reaction cycle. Several rounds of ATP-dependent interactions between DnaJ, DnaK and GrpE are required for fully efficient folding. The polypeptide is Protein GrpE (Limosilactobacillus reuteri (strain DSM 20016) (Lactobacillus reuteri)).